A 268-amino-acid polypeptide reads, in one-letter code: MSDRREQFQYAFLDSGIGGLPYAHALRVRVPEASLVYVADRVYFPYGNKSSAQIIARASAVLQKVQTNFSPHIVVLACNSMSVNALEFLRAQVSVPVVGVVPAIKQAVACSHKKHIGVLATQCTITHPYTACLRAQFGAGCVFQMRADARLIECLERGLIFEVEDMQREAVARSVMPFQEAGVDVLVLACTHFVHVRHLFQDCVGTSCTVVDSLEGVVRRTLRLCPPQSQLRGNAACYVTGARDAVCAARYARYAQHFGLRWAGFLDV.

Substrate is bound by residues Asp-14 to Ser-15 and Tyr-46 to Gly-47. Residue Cys-78 is the Proton donor/acceptor of the active site. Asn-79–Ser-80 serves as a coordination point for substrate. Catalysis depends on Cys-190, which acts as the Proton donor/acceptor. Thr-191–His-192 contacts substrate.

The protein belongs to the aspartate/glutamate racemases family.

The catalysed reaction is L-glutamate = D-glutamate. The protein operates within cell wall biogenesis; peptidoglycan biosynthesis. Functionally, provides the (R)-glutamate required for cell wall biosynthesis. This chain is Glutamate racemase, found in Treponema pallidum (strain Nichols).